Consider the following 140-residue polypeptide: L-fucose mutarotase (140 aa).

His-22 acts as the Proton donor in catalysis. Substrate is bound by residues Asp-30, Arg-107, and Tyr-129–Asn-131.

This sequence belongs to the RbsD / FucU family. FucU mutarotase subfamily. In terms of assembly, homodecamer.

Its subcellular location is the cytoplasm. It catalyses the reaction alpha-L-fucose = beta-L-fucose. It participates in carbohydrate metabolism; L-fucose metabolism. Involved in the anomeric conversion of L-fucose. This chain is L-fucose mutarotase, found in Salmonella arizonae (strain ATCC BAA-731 / CDC346-86 / RSK2980).